Here is a 485-residue protein sequence, read N- to C-terminus: Glutamyl-tRNA(Gln) amidotransferase subunit A (485 aa).

Active-site charge relay system residues include K79 and S154. S178 acts as the Acyl-ester intermediate in catalysis.

The protein belongs to the amidase family. GatA subfamily. As to quaternary structure, heterotrimer of A, B and C subunits.

The enzyme catalyses L-glutamyl-tRNA(Gln) + L-glutamine + ATP + H2O = L-glutaminyl-tRNA(Gln) + L-glutamate + ADP + phosphate + H(+). Functionally, allows the formation of correctly charged Gln-tRNA(Gln) through the transamidation of misacylated Glu-tRNA(Gln) in organisms which lack glutaminyl-tRNA synthetase. The reaction takes place in the presence of glutamine and ATP through an activated gamma-phospho-Glu-tRNA(Gln). The polypeptide is Glutamyl-tRNA(Gln) amidotransferase subunit A (Staphylococcus aureus (strain bovine RF122 / ET3-1)).